A 73-amino-acid polypeptide reads, in one-letter code: Large ribosomal subunit protein bL31 (73 aa).

Positions 16, 18, 36, and 39 each coordinate Zn(2+).

Belongs to the bacterial ribosomal protein bL31 family. Type A subfamily. In terms of assembly, part of the 50S ribosomal subunit. Zn(2+) serves as cofactor.

Functionally, binds the 23S rRNA. The protein is Large ribosomal subunit protein bL31 of Desulfosudis oleivorans (strain DSM 6200 / JCM 39069 / Hxd3) (Desulfococcus oleovorans).